The following is a 264-amino-acid chain: Putative serine carboxypeptidase-like 53 (264 aa).

The first 23 residues, 1–23 (MGKLQDWSITTCLFLFFLHASQT), serve as a signal peptide directing secretion. N-linked (GlcNAc...) asparagine glycans are attached at residues N65, N101, N153, and N184.

This sequence belongs to the peptidase S10 family.

The protein localises to the secreted. The polypeptide is Putative serine carboxypeptidase-like 53 (SCPL53) (Arabidopsis thaliana (Mouse-ear cress)).